The chain runs to 210 residues: Large ribosomal subunit protein uL3 (210 aa).

It belongs to the universal ribosomal protein uL3 family. As to quaternary structure, part of the 50S ribosomal subunit. Forms a cluster with proteins L14 and L19.

Its function is as follows. One of the primary rRNA binding proteins, it binds directly near the 3'-end of the 23S rRNA, where it nucleates assembly of the 50S subunit. This is Large ribosomal subunit protein uL3 from Syntrophotalea carbinolica (strain DSM 2380 / NBRC 103641 / GraBd1) (Pelobacter carbinolicus).